Reading from the N-terminus, the 456-residue chain is Cysteine--tRNA ligase (456 aa).

Cysteine 29 is a Zn(2+) binding site. The 'HIGH' region motif lies at valine 31–histidine 41. 3 residues coordinate Zn(2+): cysteine 210, histidine 235, and glutamate 239. The 'KMSKS' region signature appears at lysine 267–serine 271. Lysine 270 lines the ATP pocket.

This sequence belongs to the class-I aminoacyl-tRNA synthetase family. In terms of assembly, monomer. Zn(2+) serves as cofactor.

It localises to the cytoplasm. The catalysed reaction is tRNA(Cys) + L-cysteine + ATP = L-cysteinyl-tRNA(Cys) + AMP + diphosphate. The polypeptide is Cysteine--tRNA ligase (Hydrogenovibrio crunogenus (strain DSM 25203 / XCL-2) (Thiomicrospira crunogena)).